The sequence spans 438 residues: Probable tRNA pseudouridine synthase D (438 aa).

Aspartate 86 (nucleophile) is an active-site residue. A TRUD domain is found at 165–390; that stretch reads GVPNFFGIQR…SKGTRRELLL (226 aa).

The protein belongs to the pseudouridine synthase TruD family.

It carries out the reaction uridine(13) in tRNA = pseudouridine(13) in tRNA. Could be responsible for synthesis of pseudouridine from uracil-13 in transfer RNAs. In Methanosarcina barkeri (strain Fusaro / DSM 804), this protein is Probable tRNA pseudouridine synthase D.